Reading from the N-terminus, the 329-residue chain is Flotillin-like protein FloA (329 aa).

2 helical membrane passes run 4-24 and 26-46; these read IGFI…FSFV and VGLW…TLVG.

The protein belongs to the flotillin-like FloA family. In terms of assembly, homooligomerizes.

The protein localises to the cell membrane. The protein resides in the membrane raft. Functionally, found in functional membrane microdomains (FMM) that may be equivalent to eukaryotic membrane rafts. FMMs are highly dynamic and increase in number as cells age. Flotillins are thought to be important factors in membrane fluidity. The protein is Flotillin-like protein FloA of Staphylococcus epidermidis (strain ATCC 35984 / DSM 28319 / BCRC 17069 / CCUG 31568 / BM 3577 / RP62A).